A 357-amino-acid polypeptide reads, in one-letter code: MDLPVNLTSFSLSTPSPLETNHSLGKDDLRPSSPLLSVFGVLILTLLGFLVAATFAWNLLVLATILRVRTFHRVPHNLVASMAVSDVLVAALVMPLSLVHELSGRRWQLGRRLCQLWIACDVLCCTASIWNVTAIALDRYWSITRHMEYTLRTRKCVSNVMIALTWALSAVISLAPLLFGWGETYSEGSEECQVSREPSYAVFSTVGAFYLPLCVVLFVYWKIYKAAKFRVGSRKTNSVSPISEAVEVKDSAKQPQMVFTVRHATVTFQPEGDTWREQKEQRAALMVGILIGVFVLCWIPFFLTELISPLCSCDIPAIWKSIFLWLGYSNSFFNPLIYTAFNKNYNSAFKNFFSRQH.

The Extracellular portion of the chain corresponds to 1-36 (MDLPVNLTSFSLSTPSPLETNHSLGKDDLRPSSPLL). N-linked (GlcNAc...) asparagine glycans are attached at residues N6 and N21. A helical transmembrane segment spans residues 37 to 63 (SVFGVLILTLLGFLVAATFAWNLLVLA). Residues 64-76 (TILRVRTFHRVPH) are Cytoplasmic-facing. Residues 77–103 (NLVASMAVSDVLVAALVMPLSLVHELS) form a helical membrane-spanning segment. The Extracellular segment spans residues 104–114 (GRRWQLGRRLC). A disulfide bridge connects residues C114 and C192. Residues 115–137 (QLWIACDVLCCTASIWNVTAIAL) traverse the membrane as a helical segment. D121 provides a ligand contact to serotonin. The Cytoplasmic portion of the chain corresponds to 138 to 155 (DRYWSITRHMEYTLRTRK). A helical membrane pass occupies residues 156 to 176 (CVSNVMIALTWALSAVISLAP). Residues 177–198 (LLFGWGETYSEGSEECQVSREP) lie on the Extracellular side of the membrane. The helical transmembrane segment at 199 to 220 (SYAVFSTVGAFYLPLCVVLFVY) threads the bilayer. The Cytoplasmic portion of the chain corresponds to 221–287 (WKIYKAAKFR…QKEQRAALMV (67 aa)). The chain crosses the membrane as a helical span at residues 288-312 (GILIGVFVLCWIPFFLTELISPLCS). Over 313–314 (CD) the chain is Extracellular. Residues 315–339 (IPAIWKSIFLWLGYSNSFFNPLIYT) form a helical membrane-spanning segment. Residues 340–357 (AFNKNYNSAFKNFFSRQH) lie on the Cytoplasmic side of the membrane.

The protein belongs to the G-protein coupled receptor 1 family.

The protein localises to the cell membrane. Its function is as follows. G-protein coupled receptor for 5-hydroxytryptamine (serotonin), a biogenic hormone that functions as a neurotransmitter, a hormone and a mitogen. Also functions as a receptor for ergot alkaloid derivatives and other psychoactive substances. Ligand binding causes a conformation change that triggers signaling via guanine nucleotide-binding proteins (G proteins) and modulates the activity of downstream effectors. HTR5A is coupled to G(i)/G(o) G alpha proteins and mediates inhibitory neurotransmission: signaling inhibits adenylate cyclase activity and activates a phosphatidylinositol-calcium second messenger system that regulates the release of Ca(2+) ions from intracellular stores. This is 5-hydroxytryptamine receptor 5A from Homo sapiens (Human).